Reading from the N-terminus, the 469-residue chain is 3-isopropylmalate dehydratase large subunit (469 aa).

[4Fe-4S] cluster is bound by residues cysteine 347, cysteine 410, and cysteine 413.

It belongs to the aconitase/IPM isomerase family. LeuC type 1 subfamily. As to quaternary structure, heterodimer of LeuC and LeuD. It depends on [4Fe-4S] cluster as a cofactor.

The enzyme catalyses (2R,3S)-3-isopropylmalate = (2S)-2-isopropylmalate. Its pathway is amino-acid biosynthesis; L-leucine biosynthesis; L-leucine from 3-methyl-2-oxobutanoate: step 2/4. Its function is as follows. Catalyzes the isomerization between 2-isopropylmalate and 3-isopropylmalate, via the formation of 2-isopropylmaleate. The chain is 3-isopropylmalate dehydratase large subunit from Burkholderia vietnamiensis (strain G4 / LMG 22486) (Burkholderia cepacia (strain R1808)).